Consider the following 97-residue polypeptide: MEKVTSIFFVLLLISSCLILRSQGQFRCKSVAECDSRGCRVGTHVICNEHHICTCAHGSPIGGQCDGVEDCDLSGCPPNSHVICDRIGGNFCTCVPN.

The first 24 residues, 1-24 (MEKVTSIFFVLLLISSCLILRSQG), serve as a signal peptide directing secretion. 6 disulfide bridges follow: cysteine 28–cysteine 47, cysteine 34–cysteine 53, cysteine 39–cysteine 55, cysteine 65–cysteine 84, cysteine 71–cysteine 92, and cysteine 76–cysteine 94.

It belongs to the DEFL family.

The protein localises to the secreted. This is Defensin-like protein 301 from Arabidopsis thaliana (Mouse-ear cress).